Consider the following 162-residue polypeptide: Caveolin-2 (162 aa).

Residues 1 to 86 (MGLETEKADV…FEISKYVMYK (86 aa)) are Cytoplasmic-facing. The residue at position 19 (Tyr19) is a Phosphotyrosine; by SRC. Phosphoserine is present on residues Ser20 and Ser23. At Tyr27 the chain carries Phosphotyrosine; by SRC. Ser36 carries the phosphoserine modification. Residues 87 to 107 (FLTVFLAIPLAFLAGILFATL) constitute an intramembrane region (helical). Residues 108 to 162 (SCLHIWIIMPFVKTCLMVLPSVQTIWKSVTDAIIAPLCTSIGRSFSSVSLQLSQD) are Cytoplasmic-facing.

It belongs to the caveolin family. Monomer or homodimer. Interacts with CAV1; the interaction forms a stable heterooligomeric complex that is required for targeting to lipid rafts and for caveolae formation. Tyrosine phosphorylated forms do not form heterooligomers with the Tyr-19-phosphorylated form existing as a monomer or dimer, and the Tyr-27-form as a monomer only. Interacts (tyrosine phosphorylated form) with the SH2 domain-containing proteins, RASA1, NCK1 and SRC. Interacts (tyrosine phosphorylated form) with INSR, the interaction (Tyr-27-phosphorylated form) is increased on insulin stimulation. Interacts (Tyr-19 phosphorylated form) with MAPK1 (phosphorylated form); the interaction, promoted by insulin, leads to nuclear location and MAPK1 activation. Interacts with STAT3; the interaction is increased on insulin-induced tyrosine phosphorylation leading to STAT activation. In terms of processing, phosphorylated on serine and tyrosine residues. CAV1 promotes phosphorylation on Ser-23 which then targets the complex to the plasma membrane, lipid rafts and caveolae. Phosphorylation on Ser-36 appears to modulate mitosis in endothelial cells. Phosphorylation on both Tyr-19 and Tyr-27 is required for insulin-induced 'Ser-727' phosphorylation of STAT3 and its activation. Phosphorylation on Tyr-19 is required for insulin-induced phosphorylation of MAPK1 and DNA binding of STAT3. Tyrosine phosphorylation is induced by both EGF and insulin (By. similarity).

It is found in the nucleus. Its subcellular location is the cytoplasm. The protein resides in the golgi apparatus membrane. The protein localises to the cell membrane. It localises to the membrane. It is found in the caveola. Functionally, may act as a scaffolding protein within caveolar membranes. Interacts directly with G-protein alpha subunits and can functionally regulate their activity. Acts as an accessory protein in conjunction with CAV1 in targeting to lipid rafts and driving caveolae formation. The Ser-36 phosphorylated form has a role in modulating mitosis in endothelial cells. Positive regulator of cellular mitogenesis of the MAPK signaling pathway. Required for the insulin-stimulated nuclear translocation and activation of MAPK1 and STAT3, and the subsequent regulation of cell cycle progression. This is Caveolin-2 (CAV2) from Plecturocebus moloch (Dusky titi monkey).